The chain runs to 259 residues: tRNA (guanine-N(7)-)-methyltransferase (259 aa).

A compositionally biased stretch (basic and acidic residues) spans 1–11 (MSNTDNSDKNT). The segment at 1–29 (MSNTDNSDKNTKPTGYRPPQTDFNTEFGN) is disordered. Glutamate 89, glutamate 114, aspartate 141, and aspartate 164 together coordinate S-adenosyl-L-methionine. The active site involves aspartate 164. Substrate-binding positions include lysine 168, aspartate 200, and 238–241 (TKFE).

It belongs to the class I-like SAM-binding methyltransferase superfamily. TrmB family.

It carries out the reaction guanosine(46) in tRNA + S-adenosyl-L-methionine = N(7)-methylguanosine(46) in tRNA + S-adenosyl-L-homocysteine. Its pathway is tRNA modification; N(7)-methylguanine-tRNA biosynthesis. Its function is as follows. Catalyzes the formation of N(7)-methylguanine at position 46 (m7G46) in tRNA. The polypeptide is tRNA (guanine-N(7)-)-methyltransferase (Corynebacterium diphtheriae (strain ATCC 700971 / NCTC 13129 / Biotype gravis)).